A 213-amino-acid chain; its full sequence is Probable glutathione S-transferase DHAR1, cytosolic (213 aa).

2 residues coordinate glutathione: K8 and D19. The L-ascorbate site is built by K8 and D19. A GST N-terminal domain is found at 10-89 (AVGHPDTLGD…VIEEKYPTPS (80 aa)). C20 serves as the catalytic Nucleophile. 5 residues coordinate glutathione: K47, V60, S74, H160, and W207. Residues 73 to 213 (DSDVITQVIE…IAGWAPKVNA (141 aa)) enclose the GST C-terminal domain. K210 serves as a coordination point for L-ascorbate.

It belongs to the GST superfamily. DHAR family. Monomer.

The protein localises to the cytoplasm. The protein resides in the cytosol. The enzyme catalyses RX + glutathione = an S-substituted glutathione + a halide anion + H(+). It catalyses the reaction L-dehydroascorbate + 2 glutathione = glutathione disulfide + L-ascorbate. Functionally, involved in ascorbate homeostasis. Maintains redox pools of ascorbate by recycling dihydroascorbate (DHA) to ascorbate. Involved in scavenging reactive oxygen species (ROS) under oxidative stresses. Possesses dehydroascorbate reductase (DHAR) activity in vitro. May function via a ping-pong reaction mechanism with an electron transfer at the active site. Possesses chaperone-like activity in vitro. This Oryza sativa subsp. japonica (Rice) protein is Probable glutathione S-transferase DHAR1, cytosolic.